A 367-amino-acid polypeptide reads, in one-letter code: Zinc metalloproteinase nas-22 (367 aa).

A signal peptide spans 1–16 (MKSFFILLSILQECYG). One can recognise a Peptidase M12A domain in the interval 41-237 (VLIRGSDEER…LMINKYYECS (197 aa)). 2 N-linked (GlcNAc...) asparagine glycosylation sites follow: Asn56 and Asn85. Disulfide bonds link Cys88-Cys236, Cys111-Cys130, Cys238-Cys258, and Cys260-Cys269. Position 138 (His138) interacts with Zn(2+). Residue Glu139 is part of the active site. Zn(2+) is bound by residues His142 and His148. N-linked (GlcNAc...) asparagine glycans are attached at residues Asn169, Asn241, and Asn254. Residues 232-270 (KYYECSCANNLSCKNHGYPNPSNCSQCNCPYGFGGADCS) enclose the EGF-like domain. 2 N-linked (GlcNAc...) asparagine glycosylation sites follow: Asn287 and Asn322.

It depends on Zn(2+) as a cofactor. As to expression, expressed in uterine seam (utse) cell.

Its subcellular location is the secreted. Functionally, metalloprotease. This chain is Zinc metalloproteinase nas-22 (nas-22), found in Caenorhabditis elegans.